The primary structure comprises 166 residues: Putative methyltransferase Rv1506c (166 aa).

The protein belongs to the methyltransferase superfamily.

In terms of biological role, probably plays a role in host phagosome maturation arrest, as well as a role in the synthesis of acyltrehalose-containing glycolipids. This chain is Putative methyltransferase Rv1506c, found in Mycobacterium tuberculosis (strain ATCC 25618 / H37Rv).